Consider the following 305-residue polypeptide: Ribosomal RNA small subunit methyltransferase H (305 aa).

S-adenosyl-L-methionine-binding positions include G47–H49, D66, F93, D108, and Q115. Positions A279–E305 are disordered. The span at R291–E305 shows a compositional bias: basic residues.

This sequence belongs to the methyltransferase superfamily. RsmH family.

The protein localises to the cytoplasm. It catalyses the reaction cytidine(1402) in 16S rRNA + S-adenosyl-L-methionine = N(4)-methylcytidine(1402) in 16S rRNA + S-adenosyl-L-homocysteine + H(+). Functionally, specifically methylates the N4 position of cytidine in position 1402 (C1402) of 16S rRNA. In Prochlorococcus marinus (strain SARG / CCMP1375 / SS120), this protein is Ribosomal RNA small subunit methyltransferase H.